A 409-amino-acid polypeptide reads, in one-letter code: Elongation factor Tu (409 aa).

In terms of domain architecture, tr-type G spans 10–214 (KPHVNIGTIG…EVDAYIPTPE (205 aa)). Positions 19–26 (GHVDHGKT) are G1. Position 19 to 26 (19 to 26 (GHVDHGKT)) interacts with GTP. Residue Thr-26 participates in Mg(2+) binding. Positions 60–64 (GITIN) are G2. The interval 81 to 84 (DCPG) is G3. Residues 81–85 (DCPGH) and 136–139 (NKQD) contribute to the GTP site. The segment at 136–139 (NKQD) is G4. Residues 174–176 (SAL) form a G5 region.

The protein belongs to the TRAFAC class translation factor GTPase superfamily. Classic translation factor GTPase family. EF-Tu/EF-1A subfamily. Monomer.

It is found in the cytoplasm. It carries out the reaction GTP + H2O = GDP + phosphate + H(+). Its function is as follows. GTP hydrolase that promotes the GTP-dependent binding of aminoacyl-tRNA to the A-site of ribosomes during protein biosynthesis. This Acaryochloris marina (strain MBIC 11017) protein is Elongation factor Tu.